The primary structure comprises 287 residues: rRNA adenine N-6-methyltransferase (287 aa).

The segment covering 1-13 (MKKKNHKYRGKKL) has biased composition (basic residues). The disordered stretch occupies residues 1-21 (MKKKNHKYRGKKLNRGESPNF). Residues His-25, Met-27, Gly-52, Glu-73, Asp-98, and Asn-114 each coordinate S-adenosyl-L-methionine.

Belongs to the class I-like SAM-binding methyltransferase superfamily. rRNA adenine N(6)-methyltransferase family.

In terms of biological role, involved in erythromycin resistance. This is rRNA adenine N-6-methyltransferase (ermD) from Bacillus licheniformis.